The sequence spans 143 residues: Transcriptional regulator MraZ (143 aa).

SpoVT-AbrB domains are found at residues 5–47 (EYHH…PMQG) and 76–119 (ATEC…SRSR).

This sequence belongs to the MraZ family. Forms oligomers.

It localises to the cytoplasm. The protein localises to the nucleoid. The protein is Transcriptional regulator MraZ of Moorella thermoacetica (strain ATCC 39073 / JCM 9320).